Here is a 227-residue protein sequence, read N- to C-terminus: UPF0173 metal-dependent hydrolase BT9727_4343 (227 aa).

Belongs to the UPF0173 family.

This is UPF0173 metal-dependent hydrolase BT9727_4343 from Bacillus thuringiensis subsp. konkukian (strain 97-27).